We begin with the raw amino-acid sequence, 216 residues long: MTDTTLRHRTARVERVTKESSIVVELDLDGTGRTDISTGVPFYDHMLTALGAHASFDLSVRAEGDIQIEAHHTVEDTAIVFGQALGKALGDKAGIRRFGDAFIPMDETLAHAAVDVSGRPYCVHTGEPEHLLHAVIPGSPVRGTGEPGAPYSTVLNRHVFESIALNARIALHVRVLYGRDQHHVTEAEFKAVARALRAAVEFDPRVSGVPSTKGTL.

It belongs to the imidazoleglycerol-phosphate dehydratase family.

Its subcellular location is the cytoplasm. The catalysed reaction is D-erythro-1-(imidazol-4-yl)glycerol 3-phosphate = 3-(imidazol-4-yl)-2-oxopropyl phosphate + H2O. The protein operates within amino-acid biosynthesis; L-histidine biosynthesis; L-histidine from 5-phospho-alpha-D-ribose 1-diphosphate: step 6/9. The chain is Imidazoleglycerol-phosphate dehydratase from Nocardia farcinica (strain IFM 10152).